Here is a 144-residue protein sequence, read N- to C-terminus: MEKFLDINEIKKIIPHRYPFLLVDKITELEEGKSAVGYKNVTANEYFFNGHFPEEPVMPGVLIIEALAQVGAVAILSKEEFKGKIAYFGGINKAKFRKKVVPGDVLKLSIDLTKIKGVAGVGKAVATVDGKVAAEAELLFVIGK.

Residue His51 is part of the active site.

Belongs to the thioester dehydratase family. FabZ subfamily.

The protein resides in the cytoplasm. It carries out the reaction a (3R)-hydroxyacyl-[ACP] = a (2E)-enoyl-[ACP] + H2O. In terms of biological role, involved in unsaturated fatty acids biosynthesis. Catalyzes the dehydration of short chain beta-hydroxyacyl-ACPs and long chain saturated and unsaturated beta-hydroxyacyl-ACPs. The polypeptide is 3-hydroxyacyl-[acyl-carrier-protein] dehydratase FabZ (Clostridium botulinum (strain ATCC 19397 / Type A)).